We begin with the raw amino-acid sequence, 369 residues long: Coproporphyrin III ferrochelatase (369 aa).

Fe-coproporphyrin III is bound by residues serine 61 and tyrosine 130. Histidine 197 and glutamate 286 together coordinate Fe(2+).

Belongs to the ferrochelatase family.

The protein localises to the cytoplasm. It catalyses the reaction Fe-coproporphyrin III + 2 H(+) = coproporphyrin III + Fe(2+). The protein operates within porphyrin-containing compound metabolism; protoheme biosynthesis. Involved in coproporphyrin-dependent heme b biosynthesis. Catalyzes the insertion of ferrous iron into coproporphyrin III to form Fe-coproporphyrin III. The chain is Coproporphyrin III ferrochelatase from Corynebacterium diphtheriae (strain ATCC 700971 / NCTC 13129 / Biotype gravis).